A 94-amino-acid chain; its full sequence is Small ribosomal subunit protein bS18 (94 aa).

The protein belongs to the bacterial ribosomal protein bS18 family. Part of the 30S ribosomal subunit. Forms a tight heterodimer with protein bS6.

Its function is as follows. Binds as a heterodimer with protein bS6 to the central domain of the 16S rRNA, where it helps stabilize the platform of the 30S subunit. This is Small ribosomal subunit protein bS18 from Rickettsia bellii (strain OSU 85-389).